The chain runs to 224 residues: Heme response regulator HssR (224 aa).

Positions 3 to 116 (QCLVVDDDPR…ELIFRIRAVL (114 aa)) constitute a Response regulatory domain. Asp-52 carries the post-translational modification 4-aspartylphosphate. The ompR/PhoB-type DNA-binding region spans 124–222 (NSEMTIGNLT…VRGQGYKVEN (99 aa)).

In terms of processing, phosphorylated by HssS.

The protein localises to the cytoplasm. Functionally, member of the two-component regulatory system HssS/HssR involved in intracellular heme homeostasis and tempering of staphylococcal virulence. Phosphorylated HssR binds to a direct repeat sequence within hrtAB promoter and activates the expression of hrtAB, an efflux pump, in response to extracellular heme, hemin, hemoglobin or blood. This chain is Heme response regulator HssR (hssR), found in Staphylococcus aureus (strain MRSA252).